The following is a 318-amino-acid chain: tRNA uridine(34) hydroxylase (318 aa).

The Rhodanese domain maps to Glu-123–Gln-217. The active-site Cysteine persulfide intermediate is the Cys-177.

Belongs to the TrhO family.

It catalyses the reaction uridine(34) in tRNA + AH2 + O2 = 5-hydroxyuridine(34) in tRNA + A + H2O. Catalyzes oxygen-dependent 5-hydroxyuridine (ho5U) modification at position 34 in tRNAs. This is tRNA uridine(34) hydroxylase from Staphylococcus aureus (strain bovine RF122 / ET3-1).